A 237-amino-acid polypeptide reads, in one-letter code: Flagellar L-ring protein (237 aa).

A signal peptide spans 1-16 (MIKRSAVVLMAVILTG). Residue cysteine 17 is the site of N-palmitoyl cysteine attachment. Cysteine 17 carries the S-diacylglycerol cysteine lipid modification. The tract at residues 122 to 143 (PPDSSGDMSTDSNSSSDGKGSV) is disordered. Positions 124–140 (DSSGDMSTDSNSSSDGK) are enriched in low complexity.

This sequence belongs to the FlgH family. As to quaternary structure, the basal body constitutes a major portion of the flagellar organelle and consists of four rings (L,P,S, and M) mounted on a central rod.

The protein localises to the cell outer membrane. It localises to the bacterial flagellum basal body. Assembles around the rod to form the L-ring and probably protects the motor/basal body from shearing forces during rotation. This Allorhizobium ampelinum (strain ATCC BAA-846 / DSM 112012 / S4) (Agrobacterium vitis (strain S4)) protein is Flagellar L-ring protein.